Here is a 475-residue protein sequence, read N- to C-terminus: Sulfate adenylyltransferase subunit 1 (475 aa).

The tr-type G domain occupies 25–239 (KSLLRFLTCG…EVLETVEIQR (215 aa)). The tract at residues 34–41 (GSVDDGKS) is G1. 34–41 (GSVDDGKS) is a GTP binding site. A G2 region spans residues 92-96 (GITID). Positions 113–116 (DTPG) are G3. GTP is bound by residues 113-117 (DTPGH) and 168-171 (NKMD). The segment at 168–171 (NKMD) is G4. Residues 206–208 (SAL) are G5.

It belongs to the TRAFAC class translation factor GTPase superfamily. Classic translation factor GTPase family. CysN/NodQ subfamily. As to quaternary structure, heterodimer composed of CysD, the smaller subunit, and CysN.

It carries out the reaction sulfate + ATP + H(+) = adenosine 5'-phosphosulfate + diphosphate. It functions in the pathway sulfur metabolism; hydrogen sulfide biosynthesis; sulfite from sulfate: step 1/3. Its function is as follows. With CysD forms the ATP sulfurylase (ATPS) that catalyzes the adenylation of sulfate producing adenosine 5'-phosphosulfate (APS) and diphosphate, the first enzymatic step in sulfur assimilation pathway. APS synthesis involves the formation of a high-energy phosphoric-sulfuric acid anhydride bond driven by GTP hydrolysis by CysN coupled to ATP hydrolysis by CysD. The chain is Sulfate adenylyltransferase subunit 1 from Shigella boydii serotype 18 (strain CDC 3083-94 / BS512).